The sequence spans 238 residues: Transcriptional repressor ThaA (238 aa).

An HTH luxR-type domain is found at Ile169–Gly234. Residues Val193 to Gln212 constitute a DNA-binding region (H-T-H motif).

It belongs to the autoinducer-regulated transcriptional regulatory protein family.

In terms of biological role, represses thailandamide production. This Burkholderia thailandensis (strain ATCC 700388 / DSM 13276 / CCUG 48851 / CIP 106301 / E264) protein is Transcriptional repressor ThaA.